The following is a 346-amino-acid chain: DNA repair protein XRCC3 (346 aa).

M1 carries the N-acetylmethionine modification. Residue 107–114 (GRSSAGKT) participates in ATP binding.

It belongs to the RecA family. RAD51 subfamily. Interacts with RAD51C and RAD51. Part of the CX3 complex consisting of RAD51C and XRCC3; the complex has a ring-like structure arranged into a flat disk around a central channel; CX3 can interact with RAD51 in vitro. Forms a complex with FANCD2, BRCA2 and phosphorylated FANCG. Interacts with SWSAP1 and ZSWIM7; involved in homologous recombination repair. Interacts directly with PALB2 which may serve as a scaffold for a HR complex containing PALB2, BRCA2, RAD51C, RAD51 and XRCC3.

It localises to the nucleus. Its subcellular location is the cytoplasm. It is found in the perinuclear region. The protein resides in the mitochondrion. Its function is as follows. Involved in the homologous recombination repair (HRR) pathway of double-stranded DNA, thought to repair chromosomal fragmentation, translocations and deletions. Part of the RAD51 paralog protein complex CX3 which acts in the BRCA1-BRCA2-dependent HR pathway. Upon DNA damage, CX3 acts downstream of RAD51 recruitment; the complex binds predominantly to the intersection of the four duplex arms of the Holliday junction (HJ) and to junctions of replication forks. Involved in HJ resolution and thus in processing HR intermediates late in the DNA repair process; the function may be linked to the CX3 complex and seems to involve GEN1 during mitotic cell cycle progression. Part of a PALB2-scaffolded HR complex containing BRCA2 and RAD51C and which is thought to play a role in DNA repair by HR. Plays a role in regulating mitochondrial DNA copy number under conditions of oxidative stress in the presence of RAD51 and RAD51C. The chain is DNA repair protein XRCC3 (XRCC3) from Homo sapiens (Human).